The sequence spans 429 residues: UDP-N-acetylglucosamine 1-carboxyvinyltransferase (429 aa).

22–23 (KN) contacts phosphoenolpyruvate. Arg102 is a binding site for UDP-N-acetyl-alpha-D-glucosamine. The Proton donor role is filled by Cys126. A 2-(S-cysteinyl)pyruvic acid O-phosphothioketal modification is found at Cys126. UDP-N-acetyl-alpha-D-glucosamine is bound by residues 131–135 (RPVDL), Asp316, and Ile338.

It belongs to the EPSP synthase family. MurA subfamily.

It localises to the cytoplasm. It catalyses the reaction phosphoenolpyruvate + UDP-N-acetyl-alpha-D-glucosamine = UDP-N-acetyl-3-O-(1-carboxyvinyl)-alpha-D-glucosamine + phosphate. Its pathway is cell wall biogenesis; peptidoglycan biosynthesis. Functionally, cell wall formation. Adds enolpyruvyl to UDP-N-acetylglucosamine. This Rhodopseudomonas palustris (strain BisB18) protein is UDP-N-acetylglucosamine 1-carboxyvinyltransferase.